The sequence spans 156 residues: Endoribonuclease YbeY (156 aa).

The Zn(2+) site is built by histidine 115, histidine 119, and histidine 125.

This sequence belongs to the endoribonuclease YbeY family. Requires Zn(2+) as cofactor.

The protein localises to the cytoplasm. In terms of biological role, single strand-specific metallo-endoribonuclease involved in late-stage 70S ribosome quality control and in maturation of the 3' terminus of the 16S rRNA. This is Endoribonuclease YbeY from Actinobacillus succinogenes (strain ATCC 55618 / DSM 22257 / CCUG 43843 / 130Z).